Consider the following 170-residue polypeptide: Ubiquitin-conjugating enzyme E2 J2-like (170 aa).

The region spanning 15-165 (DCITRLKREF…NKTFCELFPY (151 aa)) is the UBC core domain. Catalysis depends on C97, which acts as the Glycyl thioester intermediate.

Belongs to the ubiquitin-conjugating enzyme family.

The catalysed reaction is S-ubiquitinyl-[E1 ubiquitin-activating enzyme]-L-cysteine + [E2 ubiquitin-conjugating enzyme]-L-cysteine = [E1 ubiquitin-activating enzyme]-L-cysteine + S-ubiquitinyl-[E2 ubiquitin-conjugating enzyme]-L-cysteine.. Its pathway is protein modification; protein ubiquitination. Functionally, catalyzes the covalent attachment of ubiquitin to other proteins. The polypeptide is Ubiquitin-conjugating enzyme E2 J2-like (Dictyostelium discoideum (Social amoeba)).